The chain runs to 443 residues: Trigger factor (443 aa).

One can recognise a PPIase FKBP-type domain in the interval 163-248; sequence GDTAVIDFEG…INEIKAKELP (86 aa).

This sequence belongs to the FKBP-type PPIase family. Tig subfamily.

It localises to the cytoplasm. The enzyme catalyses [protein]-peptidylproline (omega=180) = [protein]-peptidylproline (omega=0). Its function is as follows. Involved in protein export. Acts as a chaperone by maintaining the newly synthesized protein in an open conformation. Functions as a peptidyl-prolyl cis-trans isomerase. This chain is Trigger factor, found in Agathobacter rectalis (strain ATCC 33656 / DSM 3377 / JCM 17463 / KCTC 5835 / VPI 0990) (Eubacterium rectale).